The following is a 222-amino-acid chain: Interleukin-12 subunit alpha (222 aa).

The signal sequence occupies residues 1–25; the sequence is MCPLRSLFLMATLVFLNHLDHLSLA. 3 cysteine pairs are disulfide-bonded: C40–C113, C67–C199, and C88–C126. N-linked (GlcNAc...) asparagine glycans are attached at residues N96 and N174.

Belongs to the IL-6 superfamily. As to quaternary structure, heterodimer with IL12B; disulfide-linked. This heterodimer is known as interleukin IL-12. Heterodimer with EBI3/IL27B; not disulfide-linked. This heterodimer is known as interleukin IL-35. Interacts with NBR1; this interaction promotes IL-12 secretion.

The protein resides in the secreted. Its function is as follows. Heterodimerizes with IL12B to form the IL-12 cytokine or with EBI3/IL27B to form the IL-35 cytokine. IL-12 is primarily produced by professional antigen-presenting cells (APCs) such as B-cells and dendritic cells (DCs) as well as macrophages and granulocytes and regulates T-cell and natural killer-cell responses, induces the production of interferon-gamma (IFN-gamma), favors the differentiation of T-helper 1 (Th1) cells and is an important link between innate resistance and adaptive immunity. Mechanistically, exerts its biological effects through a receptor composed of IL12R1 and IL12R2 subunits. Binding to the receptor results in the rapid tyrosine phosphorylation of a number of cellular substrates including the JAK family kinases TYK2 and JAK2. In turn, recruited STAT4 gets phosphorylated and translocates to the nucleus where it regulates cytokine/growth factor responsive genes. As part of IL-35, plays essential roles in maintaining the immune homeostasis of the liver microenvironment and also functions as an immune-suppressive cytokine. Mediates biological events through unconventional receptors composed of IL12RB2 and gp130/IL6ST heterodimers or homodimers. Signaling requires the transcription factors STAT1 and STAT4, which form a unique heterodimer that binds to distinct DNA sites. The chain is Interleukin-12 subunit alpha (IL12A) from Lama glama (Llama).